The primary structure comprises 509 residues: Bifunctional purine biosynthesis protein PurH (509 aa).

Positions 1–144 constitute an MGS-like domain; it reads MKRALISVSD…KNYAAVTVVV (144 aa).

Belongs to the PurH family.

The enzyme catalyses (6R)-10-formyltetrahydrofolate + 5-amino-1-(5-phospho-beta-D-ribosyl)imidazole-4-carboxamide = 5-formamido-1-(5-phospho-D-ribosyl)imidazole-4-carboxamide + (6S)-5,6,7,8-tetrahydrofolate. It catalyses the reaction IMP + H2O = 5-formamido-1-(5-phospho-D-ribosyl)imidazole-4-carboxamide. The protein operates within purine metabolism; IMP biosynthesis via de novo pathway; 5-formamido-1-(5-phospho-D-ribosyl)imidazole-4-carboxamide from 5-amino-1-(5-phospho-D-ribosyl)imidazole-4-carboxamide (10-formyl THF route): step 1/1. It participates in purine metabolism; IMP biosynthesis via de novo pathway; IMP from 5-formamido-1-(5-phospho-D-ribosyl)imidazole-4-carboxamide: step 1/1. In Listeria monocytogenes serotype 4b (strain F2365), this protein is Bifunctional purine biosynthesis protein PurH.